The sequence spans 160 residues: Type IV major fimbrial protein FimA (160 aa).

Positions 1 to 7 are cleaved as a propeptide — leader sequence; that stretch reads MKSLQKG. Phe8 is modified (N-methylphenylalanine). Residues 8–28 form a helical membrane-spanning segment; sequence FTLIELMIVVAIIGILAAFAI. A disulfide bridge connects residues Cys63 and Cys105.

Belongs to the N-Me-Phe pilin family. As to quaternary structure, the pili are polar flexible filaments of about 5.4 nanometers diameter and 2.5 micrometers average length; they consist of only a single polypeptide chain arranged in a helical configuration of five subunits per turn in the assembled pilus.

The protein resides in the fimbrium. The protein localises to the membrane. In terms of biological role, major component of the type IV fimbriae that plays an essential role in twitching motility, natural transformation, and protease secretion. The sequence is that of Type IV major fimbrial protein FimA (fimA) from Dichelobacter nodosus (Bacteroides nodosus).